The primary structure comprises 376 residues: Lipid-A-disaccharide synthase (376 aa).

Belongs to the LpxB family.

It catalyses the reaction a lipid X + a UDP-2-N,3-O-bis[(3R)-3-hydroxyacyl]-alpha-D-glucosamine = a lipid A disaccharide + UDP + H(+). Its pathway is bacterial outer membrane biogenesis; LPS lipid A biosynthesis. Condensation of UDP-2,3-diacylglucosamine and 2,3-diacylglucosamine-1-phosphate to form lipid A disaccharide, a precursor of lipid A, a phosphorylated glycolipid that anchors the lipopolysaccharide to the outer membrane of the cell. The sequence is that of Lipid-A-disaccharide synthase from Pseudomonas fluorescens (strain Pf0-1).